The primary structure comprises 352 residues: Photosystem II D2 protein (352 aa).

A helical transmembrane segment spans residues 40–60; the sequence is CAYLALGGWLTGTTFVTSWYT. Histidine 117 serves as a coordination point for chlorophyll a. Residues 124–140 form a helical membrane-spanning segment; the sequence is GFMLRQFEIAQSVRLRP. Pheophytin a-binding residues include glutamine 129 and asparagine 142. Residues 152 to 165 traverse the membrane as a helical segment; sequence VFVSVFLIYPLGQS. Histidine 197 serves as a coordination point for chlorophyll a. A helical transmembrane segment spans residues 207 to 227; that stretch reads AALLCAIHGATVENTLFEDGD. A plastoquinone is bound by residues histidine 214 and phenylalanine 261. A Fe cation-binding site is contributed by histidine 214. Residue histidine 268 coordinates Fe cation. Residues 278 to 294 traverse the membrane as a helical segment; the sequence is GLWMSALGVVGLALNLR.

This sequence belongs to the reaction center PufL/M/PsbA/D family. As to quaternary structure, PSII is composed of 1 copy each of membrane proteins PsbA, PsbB, PsbC, PsbD, PsbE, PsbF, PsbH, PsbI, PsbJ, PsbK, PsbL, PsbM, PsbT, PsbY, PsbZ, Psb30/Ycf12, at least 3 peripheral proteins of the oxygen-evolving complex and a large number of cofactors. It forms dimeric complexes. Requires The D1/D2 heterodimer binds P680, chlorophylls that are the primary electron donor of PSII, and subsequent electron acceptors. It shares a non-heme iron and each subunit binds pheophytin, quinone, additional chlorophylls, carotenoids and lipids. There is also a Cl(-1) ion associated with D1 and D2, which is required for oxygen evolution. The PSII complex binds additional chlorophylls, carotenoids and specific lipids. as cofactor.

Its subcellular location is the plastid. It localises to the chloroplast thylakoid membrane. It carries out the reaction 2 a plastoquinone + 4 hnu + 2 H2O = 2 a plastoquinol + O2. In terms of biological role, photosystem II (PSII) is a light-driven water:plastoquinone oxidoreductase that uses light energy to abstract electrons from H(2)O, generating O(2) and a proton gradient subsequently used for ATP formation. It consists of a core antenna complex that captures photons, and an electron transfer chain that converts photonic excitation into a charge separation. The D1/D2 (PsbA/PsbD) reaction center heterodimer binds P680, the primary electron donor of PSII as well as several subsequent electron acceptors. D2 is needed for assembly of a stable PSII complex. This is Photosystem II D2 protein from Bigelowiella natans (Pedinomonas minutissima).